A 382-amino-acid polypeptide reads, in one-letter code: Mannitol-1-phosphate 5-dehydrogenase (382 aa).

An NAD(+)-binding site is contributed by 3 to 14 (AVHFGAGNIGRG).

This sequence belongs to the mannitol dehydrogenase family.

It catalyses the reaction D-mannitol 1-phosphate + NAD(+) = beta-D-fructose 6-phosphate + NADH + H(+). This Geobacillus stearothermophilus (Bacillus stearothermophilus) protein is Mannitol-1-phosphate 5-dehydrogenase (mtlD).